A 365-amino-acid polypeptide reads, in one-letter code: uncharacterized protein (365 aa).

Positions 18 to 46 (TAQEALTLIEKLDSDYKEKEEKITALSVH) form a coiled coil.

This is an uncharacterized protein from Bacillus subtilis (strain 168).